The primary structure comprises 556 residues: DNA ligase B (556 aa).

K126 functions as the N6-AMP-lysine intermediate in the catalytic mechanism.

The protein belongs to the NAD-dependent DNA ligase family. LigB subfamily.

It carries out the reaction NAD(+) + (deoxyribonucleotide)n-3'-hydroxyl + 5'-phospho-(deoxyribonucleotide)m = (deoxyribonucleotide)n+m + AMP + beta-nicotinamide D-nucleotide.. Its function is as follows. Catalyzes the formation of phosphodiester linkages between 5'-phosphoryl and 3'-hydroxyl groups in double-stranded DNA using NAD as a coenzyme and as the energy source for the reaction. The protein is DNA ligase B of Stutzerimonas stutzeri (strain A1501) (Pseudomonas stutzeri).